The sequence spans 621 residues: Chaperone protein HscA homolog (621 aa).

Belongs to the heat shock protein 70 family.

Its function is as follows. Chaperone involved in the maturation of iron-sulfur cluster-containing proteins. Has a low intrinsic ATPase activity which is markedly stimulated by HscB. This is Chaperone protein HscA homolog from Cupriavidus taiwanensis (strain DSM 17343 / BCRC 17206 / CCUG 44338 / CIP 107171 / LMG 19424 / R1) (Ralstonia taiwanensis (strain LMG 19424)).